A 72-amino-acid polypeptide reads, in one-letter code: RTCYKTYSDKSKTCPRGEDICYTKTWCDGFCSQRGKRVELGCAATCPKVKTGVEIKCCSTDYCNPFPVWNPR.

Disulfide bonds link Cys-3-Cys-21, Cys-14-Cys-42, Cys-27-Cys-31, Cys-46-Cys-57, and Cys-58-Cys-63.

Belongs to the three-finger toxin family. Long-chain subfamily. Type II alpha-neurotoxin sub-subfamily. As to expression, expressed by the venom gland.

It is found in the secreted. Binds with high affinity to muscular (alpha-1/CHRNA1) and neuronal (alpha-7/CHRNA7) nicotinic acetylcholine receptor (nAChR) and inhibits acetylcholine from binding to the receptor, thereby impairing neuromuscular and neuronal transmission. The protein is Alpha-elapitoxin-Djk2a of Dendroaspis jamesoni kaimosae (Eastern Jameson's mamba).